A 100-amino-acid chain; its full sequence is Small ribosomal subunit protein uS14c (100 aa).

The protein belongs to the universal ribosomal protein uS14 family. In terms of assembly, part of the 30S ribosomal subunit.

Its subcellular location is the plastid. The protein localises to the chloroplast. Its function is as follows. Binds 16S rRNA, required for the assembly of 30S particles. This Physcomitrium patens (Spreading-leaved earth moss) protein is Small ribosomal subunit protein uS14c.